The following is a 373-amino-acid chain: Anhydro-N-acetylmuramic acid kinase (373 aa).

12–19 provides a ligand contact to ATP; sequence GTSLDGVD.

The protein belongs to the anhydro-N-acetylmuramic acid kinase family.

The enzyme catalyses 1,6-anhydro-N-acetyl-beta-muramate + ATP + H2O = N-acetyl-D-muramate 6-phosphate + ADP + H(+). The protein operates within amino-sugar metabolism; 1,6-anhydro-N-acetylmuramate degradation. It participates in cell wall biogenesis; peptidoglycan recycling. Its function is as follows. Catalyzes the specific phosphorylation of 1,6-anhydro-N-acetylmuramic acid (anhMurNAc) with the simultaneous cleavage of the 1,6-anhydro ring, generating MurNAc-6-P. Is required for the utilization of anhMurNAc either imported from the medium or derived from its own cell wall murein, and thus plays a role in cell wall recycling. This chain is Anhydro-N-acetylmuramic acid kinase, found in Salmonella paratyphi A (strain ATCC 9150 / SARB42).